The following is a 738-amino-acid chain: Propionyl-CoA carboxylase alpha chain, mitochondrial (738 aa).

In terms of domain architecture, Biotin carboxylation spans 62–509 (KFDKILIANR…TTKYLPEVYP (448 aa)). ATP-binding positions include lysine 177, 209–270 (SREI…PRHI), glutamate 261, and asparagine 296. In terms of domain architecture, ATP-grasp spans 181-378 (KKIATAARVS…IVQQMLRVAY (198 aa)). The Mg(2+) site is built by glutamate 336, glutamate 349, and asparagine 351. 3 residues coordinate Mn(2+): glutamate 336, glutamate 349, and asparagine 351. Arginine 353 is an active-site residue. Phenylalanine 409 contributes to the biotin binding site. Positions 663 to 738 (KAKVDLSTVV…DEGEVLVELE (76 aa)) constitute a Biotinyl-binding domain. Lysine 704 is modified (N6-biotinyllysine).

As to quaternary structure, the holoenzyme is a dodecamer composed of 6 alpha subunits and 6 beta subunits. Interacts with sir-2.2. Biotin is required as a cofactor. The cofactor is Mg(2+). Mn(2+) serves as cofactor. The biotin cofactor is covalently attached to the C-terminal biotinyl-binding domain and is required for the catalytic activity.

The protein resides in the mitochondrion matrix. The catalysed reaction is propanoyl-CoA + hydrogencarbonate + ATP = (S)-methylmalonyl-CoA + ADP + phosphate + H(+). The enzyme catalyses butanoyl-CoA + hydrogencarbonate + ATP = (2S)-ethylmalonyl-CoA + ADP + phosphate + H(+). It participates in metabolic intermediate metabolism; propanoyl-CoA degradation; succinyl-CoA from propanoyl-CoA: step 1/3. Its function is as follows. This is one of the 2 subunits of the biotin-dependent propionyl-CoA carboxylase (PCC), a mitochondrial enzyme involved in the catabolism of odd chain fatty acids, branched-chain amino acids isoleucine, threonine, methionine, and valine and other metabolites. Propionyl-CoA carboxylase catalyzes the carboxylation of propionyl-CoA/propanoyl-CoA to D-methylmalonyl-CoA/(S)-methylmalonyl-CoA. Within the holoenzyme, the alpha subunit catalyzes the ATP-dependent carboxylation of the biotin carried by the biotin carboxyl carrier (BCC) domain, while the beta subunit then transfers the carboxyl group from carboxylated biotin to propionyl-CoA. Propionyl-CoA carboxylase also significantly acts on butyryl-CoA/butanoyl-CoA, which is converted to ethylmalonyl-CoA/(2S)-ethylmalonyl-CoA. Other alternative minor substrates include (2E)-butenoyl-CoA/crotonoyl-CoA. This Caenorhabditis briggsae protein is Propionyl-CoA carboxylase alpha chain, mitochondrial (pcca-1).